A 217-amino-acid polypeptide reads, in one-letter code: uncharacterized protein (217 aa).

This is an uncharacterized protein from Methanocaldococcus jannaschii (strain ATCC 43067 / DSM 2661 / JAL-1 / JCM 10045 / NBRC 100440) (Methanococcus jannaschii).